The primary structure comprises 902 residues: MTAAISDRVREDIRLLGRVLGRVIAQQEGEEVYELVEATRRMAFDVSHGDADPEDLMVIFRDLDITKTNLVARAFSYFALLANLVEDLDDESVEADVSLRKTFAKLKREGVSAADAASVIRSAEVAPVLTAHPTETRRRTVFDTQTRIKQLLKDAHHGGDMQVIEQEMYLRMTLLWQTALIRIARPTLEDEIDVGLRYYKKSLLEQVPALNRSIRHSMRETFGLQLPDIAVMRPGSWIGGDHDGNPYVNARTLTYATRQAAKTVARYYVEQLGELERELSLSDRYSSCSKELLALAEASGNNWESRVDEPYRRAVYGMRARMKSNVDALERPEKTAGKKSSKRTPYATPEEFLRDLDVIDRSLRAHNDDVIADDRLARIRSAVTTFGFHLYTLDIRQNSESFEAVIEEVFAAARRVPGGKRYSELAEAEKVELLIQELQTPRPLLFPGALEVEDAFSADTTKELGIFLAAAQAVRDFGSRSIAHCIISMTATVSDILEPMVLLKEVGLRDVDVVPLFETIDDLRCGAAILRELWSHPFYREHLRARGDIQEVMLGYSDSNKDGGYLQANWALYDAELGLVELCREHNIELRLAHGRGGAVGRGGGPTYDAILAQPKGAVSGSVRITEQGEVISAKYGAPETARRHLEAFVSGALEASLLDTEPIADPDRAYAIMRDLAGFSGQRYQELVGDPGFIEYFTQSTPLHEIGELNLGSRPAARKQTTAISDLRAIPWVLSWSQSRTNIPGWFGVGSAVSRFVSAVPEKDRESRWQELRDLYATWPFFRSVMSNMAQVMAKAEISLARLYADLVDDPEVADRIYALIAEEFELTRRAYLAITGNEALVSENQRQARSLKRRYPYLLPLNAIQLELLRRYRGGDDQFLVSKTIQVTMNGLATALRNAG.

H132 is a catalytic residue. Residues 327 to 346 form a disordered region; the sequence is DALERPEKTAGKKSSKRTPY. K561 is an active-site residue.

The protein belongs to the PEPCase type 1 family. The cofactor is Mg(2+).

It catalyses the reaction oxaloacetate + phosphate = phosphoenolpyruvate + hydrogencarbonate. Forms oxaloacetate, a four-carbon dicarboxylic acid source for the tricarboxylic acid cycle. The polypeptide is Phosphoenolpyruvate carboxylase (Corynebacterium diphtheriae (strain ATCC 700971 / NCTC 13129 / Biotype gravis)).